We begin with the raw amino-acid sequence, 818 residues long: Fibrous sheath CABYR-binding protein (818 aa).

A disordered region spans residues 1-61; it reads MEEKDESEQS…PKAALSIGNI (61 aa). Phosphoserine occurs at positions 25, 57, and 182. Disordered stretches follow at residues 195–727 and 773–805; these read SFSK…PFIT and LESGNLDDKPKSEEPLERDTIPKDSSGTKNEGV. Low complexity-rich tracts occupy residues 490–511, 544–560, and 697–715; these read SPPAEEVPAGEPPEVQSPPAEE, EAPAGEPSEVQSPPAEE, and AELQPPSTEETTSEMVSVE. Positions 773–794 are enriched in basic and acidic residues; it reads LESGNLDDKPKSEEPLERDTIP.

As to quaternary structure, interacts with CABYR. Interacts with ROPN1 and ROPN1L; the interaction increases upon spermatozoa capacitation conditions. Post-translationally, phosphorylated by PKA upon spermatozoa capacitation conditions.

The protein localises to the cell projection. Its subcellular location is the cilium. It localises to the flagellum. Its function is as follows. May be involved in the later stages of fibrous sheath biogenesis and spermatozoa capacitation. Inhibits ROPN1 and ROPN1L SUMOylation. Binds calcium. This chain is Fibrous sheath CABYR-binding protein, found in Bos taurus (Bovine).